An 85-amino-acid chain; its full sequence is Small ribosomal subunit protein uS17 (85 aa).

It belongs to the universal ribosomal protein uS17 family. In terms of assembly, part of the 30S ribosomal subunit.

Functionally, one of the primary rRNA binding proteins, it binds specifically to the 5'-end of 16S ribosomal RNA. The polypeptide is Small ribosomal subunit protein uS17 (Blochmanniella floridana).